The following is a 217-amino-acid chain: Adenylate kinase (217 aa).

Residue glycine 10–threonine 15 coordinates ATP. The tract at residues serine 30–valine 59 is NMP. AMP-binding positions include threonine 31, arginine 36, alanine 57–valine 59, glycine 85–arginine 88, and glutamine 92. Positions glycine 126–aspartate 163 are LID. Arginine 127 is an ATP binding site. Residues cysteine 130 and cysteine 133 each contribute to the Zn(2+) site. ATP is bound at residue serine 136–tyrosine 137. 2 residues coordinate Zn(2+): cysteine 150 and aspartate 153. Residues arginine 160 and arginine 171 each contribute to the AMP site. Residue glutamine 199 participates in ATP binding.

This sequence belongs to the adenylate kinase family. Monomer.

It is found in the cytoplasm. The catalysed reaction is AMP + ATP = 2 ADP. The protein operates within purine metabolism; AMP biosynthesis via salvage pathway; AMP from ADP: step 1/1. Catalyzes the reversible transfer of the terminal phosphate group between ATP and AMP. Plays an important role in cellular energy homeostasis and in adenine nucleotide metabolism. This is Adenylate kinase from Lysinibacillus sphaericus (strain C3-41).